Here is a 138-residue protein sequence, read N- to C-terminus: Histone H2AX (138 aa).

The disordered stretch occupies residues 1–23 (MSTTGKGGKAKGKTASSKQVSRS). Position 2 is an N-acetylserine (Ser-2). N6-acetyllysine occurs at positions 6, 9, 11, 13, and 18. Position 123 is a phosphoserine (Ser-123). Lys-124 participates in a covalent cross-link: Glycyl lysine isopeptide (Lys-Gly) (interchain with G-Cter in ubiquitin). Ser-125, Ser-130, and Ser-135 each carry phosphoserine. Residues 135–136 (SQ) carry the [ST]-Q motif motif.

It belongs to the histone H2A family. The nucleosome is a histone octamer containing two molecules each of H2A, H2B, H3 and H4 assembled in one H3-H4 heterotetramer and two H2A-H2B heterodimers. The octamer wraps approximately 147 bp of DNA. In terms of processing, monoubiquitination of Lys-124 gives a specific tag for epigenetic transcriptional repression. Phosphorylated to form H2AX134ph (gamma-H2AX) in response to DNA double-strand breaks (DSBs) generated by exogenous genotoxic agents in both the mitotic MIC and the amitotic MAC. Gamma-H2AX is also found when programmed DNA rearrangements occur, namely homologous recombination in the MIC during prophase of meiosis, and chromosome fragmentation and DNA elimination in developing MACs. Gamma-H2AX is important to recover from exogenous DNA damage and to repair breaks associated with normal micronuclear meiosis and mitosis and macronuclear amitotic division. Post-translationally, acetylation occurs almost exclusively in the MAC.

Its subcellular location is the nucleus. The protein resides in the chromosome. Core component of nucleosome which plays a central role in DNA double strand break (DSB) repair. Nucleosomes wrap and compact DNA into chromatin, limiting DNA accessibility to the cellular machineries which require DNA as a template. Histones thereby play a central role in transcription regulation, DNA repair, DNA replication and chromosomal stability. DNA accessibility is regulated via a complex set of post-translational modifications of histones, also called histone code, and nucleosome remodeling. In Tetrahymena thermophila (strain SB210), this protein is Histone H2AX (HTA1).